A 215-amino-acid polypeptide reads, in one-letter code: Protein LURP-one-related 16 (215 aa).

G2 carries N-myristoyl glycine lipidation.

It belongs to the LOR family.

Might be related to the phospholipid scramblase and tubby-like superfamily of membrane tethered transcription factors. This Arabidopsis thaliana (Mouse-ear cress) protein is Protein LURP-one-related 16.